The sequence spans 140 residues: Nucleoside diphosphate kinase (140 aa).

Residues Lys-11, Phe-59, Arg-87, Thr-93, Arg-104, and Asn-114 each contribute to the ATP site. His-117 serves as the catalytic Pros-phosphohistidine intermediate.

The protein belongs to the NDK family. In terms of assembly, homotetramer. It depends on Mg(2+) as a cofactor.

Its subcellular location is the cytoplasm. It catalyses the reaction a 2'-deoxyribonucleoside 5'-diphosphate + ATP = a 2'-deoxyribonucleoside 5'-triphosphate + ADP. The enzyme catalyses a ribonucleoside 5'-diphosphate + ATP = a ribonucleoside 5'-triphosphate + ADP. In terms of biological role, major role in the synthesis of nucleoside triphosphates other than ATP. The ATP gamma phosphate is transferred to the NDP beta phosphate via a ping-pong mechanism, using a phosphorylated active-site intermediate. This chain is Nucleoside diphosphate kinase, found in Nitrobacter hamburgensis (strain DSM 10229 / NCIMB 13809 / X14).